Reading from the N-terminus, the 570-residue chain is Sulfite reductase [NADPH] hemoprotein beta-component (570 aa).

Residues cysteine 433, cysteine 439, cysteine 478, and cysteine 482 each contribute to the [4Fe-4S] cluster site. Cysteine 482 contacts siroheme.

It belongs to the nitrite and sulfite reductase 4Fe-4S domain family. Alpha(8)-beta(8). The alpha component is a flavoprotein, the beta component is a hemoprotein. Requires siroheme as cofactor. The cofactor is [4Fe-4S] cluster.

The catalysed reaction is hydrogen sulfide + 3 NADP(+) + 3 H2O = sulfite + 3 NADPH + 4 H(+). It participates in sulfur metabolism; hydrogen sulfide biosynthesis; hydrogen sulfide from sulfite (NADPH route): step 1/1. Component of the sulfite reductase complex that catalyzes the 6-electron reduction of sulfite to sulfide. This is one of several activities required for the biosynthesis of L-cysteine from sulfate. The protein is Sulfite reductase [NADPH] hemoprotein beta-component of Aeromonas hydrophila subsp. hydrophila (strain ATCC 7966 / DSM 30187 / BCRC 13018 / CCUG 14551 / JCM 1027 / KCTC 2358 / NCIMB 9240 / NCTC 8049).